We begin with the raw amino-acid sequence, 501 residues long: tRNA (guanine(37)-N(1))-methyltransferase (501 aa).

S-adenosyl-L-methionine is bound by residues His282, 320 to 321, 348 to 349, and Asn380; these read DL and DG. Residues 474–501 are disordered; that stretch reads LQNDQEPPLKRQKTGDPFSGEPQIASDS.

The protein belongs to the class I-like SAM-binding methyltransferase superfamily. TRM5/TYW2 family. Monomer.

The protein resides in the mitochondrion matrix. Its subcellular location is the nucleus. It localises to the cytoplasm. It carries out the reaction guanosine(37) in tRNA + S-adenosyl-L-methionine = N(1)-methylguanosine(37) in tRNA + S-adenosyl-L-homocysteine + H(+). Involved in mitochondrial tRNA methylation. Specifically methylates the N1 position of guanosine-37 in various tRNAs. Methylation is not dependent on the nature of the nucleoside 5' of the target nucleoside. This is the first step in the biosynthesis of wybutosine (yW), a modified base adjacent to the anticodon of tRNAs and required for accurate decoding. This chain is tRNA (guanine(37)-N(1))-methyltransferase (Trmt5), found in Mus musculus (Mouse).